Consider the following 143-residue polypeptide: Large ribosomal subunit protein uL16 (143 aa).

Residues 1–17 are compositionally biased toward basic residues; sequence MLQPKRTKFRKAHKGRI. Residues 1 to 21 form a disordered region; sequence MLQPKRTKFRKAHKGRIHGNA.

It belongs to the universal ribosomal protein uL16 family. Part of the 50S ribosomal subunit.

In terms of biological role, binds 23S rRNA and is also seen to make contacts with the A and possibly P site tRNAs. This Rhizorhabdus wittichii (strain DSM 6014 / CCUG 31198 / JCM 15750 / NBRC 105917 / EY 4224 / RW1) (Sphingomonas wittichii) protein is Large ribosomal subunit protein uL16.